Consider the following 255-residue polypeptide: Acetylglutamate kinase (255 aa).

Substrate-binding positions include 40 to 41 (GG), Arg62, and Asn153.

The protein belongs to the acetylglutamate kinase family. ArgB subfamily.

Its subcellular location is the cytoplasm. It carries out the reaction N-acetyl-L-glutamate + ATP = N-acetyl-L-glutamyl 5-phosphate + ADP. It participates in amino-acid biosynthesis; L-arginine biosynthesis; N(2)-acetyl-L-ornithine from L-glutamate: step 2/4. In terms of biological role, catalyzes the ATP-dependent phosphorylation of N-acetyl-L-glutamate. The chain is Acetylglutamate kinase from Bacillus mycoides (strain KBAB4) (Bacillus weihenstephanensis).